Here is a 124-residue protein sequence, read N- to C-terminus: MADLKAFAEQLVNLTVKEVNELATILKEEYGIEPAAAAVAVAAGPAAGAAAAEEKTSFDVVLKSAGAAKLQVVKAVKEACGLGLKEAKDMVDGAPSTVKEGLAKDEAESLKKTLEEAGAEVELK.

The protein belongs to the bacterial ribosomal protein bL12 family. As to quaternary structure, homodimer. Part of the ribosomal stalk of the 50S ribosomal subunit. Forms a multimeric L10(L12)X complex, where L10 forms an elongated spine to which 2 to 4 L12 dimers bind in a sequential fashion. Binds GTP-bound translation factors.

Its function is as follows. Forms part of the ribosomal stalk which helps the ribosome interact with GTP-bound translation factors. Is thus essential for accurate translation. This is Large ribosomal subunit protein bL12 from Phocaeicola vulgatus (strain ATCC 8482 / DSM 1447 / JCM 5826 / CCUG 4940 / NBRC 14291 / NCTC 11154) (Bacteroides vulgatus).